Reading from the N-terminus, the 187-residue chain is MLQVTPSQISGIIESGGVVAYPTEAVYGLGCDPDNDTAIQKLLAVKQRPWEKGLILIASSFDQLKPYIDLSRVTEAQLQAAFDKWPGPFTFVIPAKADVSPMLRGCFDTIAVRVSAHQDVRAMCYACQKPLVSTSANLAGEQPALTLAEVQTQLGDKIDAVVLGALGQSCQPSTIIDIQTGHIFRQG.

The 185-residue stretch at 3-187 (QVTPSQISGI…IQTGHIFRQG (185 aa)) folds into the YrdC-like domain.

Belongs to the SUA5 family. TsaC subfamily.

It localises to the cytoplasm. It catalyses the reaction L-threonine + hydrogencarbonate + ATP = L-threonylcarbamoyladenylate + diphosphate + H2O. Functionally, required for the formation of a threonylcarbamoyl group on adenosine at position 37 (t(6)A37) in tRNAs that read codons beginning with adenine. Catalyzes the conversion of L-threonine, HCO(3)(-)/CO(2) and ATP to give threonylcarbamoyl-AMP (TC-AMP) as the acyladenylate intermediate, with the release of diphosphate. The polypeptide is Threonylcarbamoyl-AMP synthase (Shewanella amazonensis (strain ATCC BAA-1098 / SB2B)).